The primary structure comprises 186 residues: Ras-related protein rapA (186 aa).

12-19 (GSGGVGKS) is a GTP binding site. Positions 34–42 (YDPTIEDSY) match the Effector region motif. Residues 59–63 (DTAGT) and 118–121 (NKCD) each bind GTP. Cys-183 is subject to Cysteine methyl ester. Residue Cys-183 is the site of S-geranylgeranyl cysteine attachment. The propeptide at 184-186 (ALL) is removed in mature form.

The protein belongs to the small GTPase superfamily. Ras family. In terms of assembly, interacts with ralGDS (only when rapA is in its GTP-bound state). Interacts with the Rap guanine nucleotide exchange factor glfB.

The protein localises to the cell membrane. It carries out the reaction GTP + H2O = GDP + phosphate + H(+). In terms of biological role, g protein of the Ras family that positively regulates phagocytosis and negatively regulates macropinocytosis. May be involved in the activation of guanylyl cyclase during the response to hyperosmotic conditions. Overexpressing cells generate alterations in cell shape and contractile responses. Involved in chemotaxis via regulation of the balance of Ras and Rap signaling at the leading edge of chemotaxing cells. The chain is Ras-related protein rapA (rapA) from Dictyostelium discoideum (Social amoeba).